Consider the following 1124-residue polypeptide: uncharacterized protein (1124 aa).

The N-terminal stretch at 1–28 (MALFPRSILIALVLSFVLNLGLVTKIHA) is a signal peptide. 7 consecutive transmembrane segments (helical) span residues 332 to 352 (IVTAFLTLYVMFFGFKLLLAG), 359 to 379 (EYINFILKIIFVTYFSIGINI), 393 to 413 (MIQWAFPFLLNGINGLASWVM), 495 to 515 (MLVSLALSYPLLVISVAAFMV), 522 to 542 (MISIVILGILAPLFVPMFLFA), 555 to 575 (MISFLLQPMVVVTFMITMFAV), and 700 to 720 (IKNILLALVTACFTLYLMYNF).

The protein belongs to the TrbL/VirB6 family.

Its subcellular location is the cell membrane. This is an uncharacterized protein from Rickettsia prowazekii (strain Madrid E).